The following is a 775-amino-acid chain: ADP-ribosylation factor GTPase-activating protein AGD4 (775 aa).

In terms of domain architecture, BAR spans 2–226 (ATFINLEDSP…IHQILTYAQQ (225 aa)). Positions 288–421 (EVIKQGYLLK…WVNKITKAIG (134 aa)) constitute a PH domain. Residues 467–603 (DDVSTILRGL…ALVIKDESEA (137 aa)) enclose the Arf-GAP domain. The segment at 482–505 (CAECNAPEPDWASLNLGVLLCIQC) adopts a C4-type zinc-finger fold. ANK repeat units lie at residues 682-711 (QGCS…DLNI) and 715-744 (HGRT…RPSI).

Expressed in roots, hypocotyls, cotyledons, leaf and shoot apical meristems and siliques.

Functionally, probable GTPase-activating protein. This chain is ADP-ribosylation factor GTPase-activating protein AGD4 (AGD4), found in Arabidopsis thaliana (Mouse-ear cress).